Reading from the N-terminus, the 116-residue chain is Spexin (116 aa).

Positions Met1–Gly26 are cleaved as a signal peptide. A propeptide spanning residues Ala27 to Arg35 is cleaved from the precursor. Gln49 is subject to Glutamine amide. Propeptides lie at residues Gly50–Trp116 and Pro74–Trp116. The segment covering Asp56–Asn73 has biased composition (basic and acidic residues). The segment at Asp56–Asn75 is disordered.

The protein belongs to the spexin family. As to expression, widely expressed; predominantly expressed in epithelial cells in the skin, respiratory, digestive, urinary and reproductive systems, retina, adrenal gland and various brain regions. In the adrenal gland, expressed in parenchymal cells of the cortex and in ganglionic cells and intermingled cortical cells of the medulla. Expressed in the type I glomic cells within the carotid body (at protein level). Widely expressed. Strongly expressed in esophagus, liver, pancreas, kidney, brain, hypothalamus, thyroid and ovary. Expressed in the zona glomerulosa (ZG) and zona fasciculata/reticularis (ZF/R) of the adrenal gland. Also expressed in stomach, lung, skeletal muscle, heart, uterus, spleen, adrenal gland and testis. Weakly expressed in small intestine, thymus, urinary bladder and adenohypophysis. In the brain, is expressed in the Barrington's nucleus, with lesser amount in the ventrolateral caudal periaqueductal gray (PAG) and in the mesopontine tegmentum.

The protein localises to the secreted. Its subcellular location is the extracellular space. It is found in the cytoplasmic vesicle. The protein resides in the secretory vesicle. Functionally, plays a role as a central modulator of cardiovascular and renal function and nociception. Also plays a role in energy metabolism and storage. Inhibits adrenocortical cell proliferation with minor stimulation on corticosteroid release. Acts as a ligand for galanin receptors GALR2 and GALR3. Intracerebroventricular administration of the peptide induces an increase in arterial blood pressure, a decrease in both heart rate and renal excretion and delayed natriuresis. Intraventricular administration of the peptide induces antinociceptive activity. Intraperitoneal administration of the peptide induces a reduction in food consumption and body weight. Inhibits long chain fatty acid uptake into adipocytes. Also induces contraction of muscarinic-like stomach smooth muscles. Its function is as follows. Intracerebroventricular administration of the peptide induces a decrease in heart rate, but no change in arterial pressure, and an increase in urine flow rate. Intraventricular administration of the peptide induces antinociceptive activity. The sequence is that of Spexin (SPX) from Rattus norvegicus (Rat).